The chain runs to 130 residues: DNA-directed RNA polymerase subunit omega (130 aa).

A disordered region spans residues 110 to 130 (EELLKGLEGLAPPEEQPEEDE).

It belongs to the RNA polymerase subunit omega family. As to quaternary structure, the RNAP catalytic core consists of 2 alpha, 1 beta, 1 beta' and 1 omega subunit. When a sigma factor is associated with the core the holoenzyme is formed, which can initiate transcription.

It carries out the reaction RNA(n) + a ribonucleoside 5'-triphosphate = RNA(n+1) + diphosphate. In terms of biological role, promotes RNA polymerase assembly. Latches the N- and C-terminal regions of the beta' subunit thereby facilitating its interaction with the beta and alpha subunits. This chain is DNA-directed RNA polymerase subunit omega, found in Bradyrhizobium sp. (strain BTAi1 / ATCC BAA-1182).